The primary structure comprises 117 residues: MRVKTGPITRKRRKKWLKLAKGYFGHKSIGFKVAKQQVVKSWTYAFRDRKQVKRHFRRLWIARINAATRAQGVSYSLFINGLKKSNIQINRKMLSEIAIHQPKVFDKILTKVKSHLK.

It belongs to the bacterial ribosomal protein bL20 family.

In terms of biological role, binds directly to 23S ribosomal RNA and is necessary for the in vitro assembly process of the 50S ribosomal subunit. It is not involved in the protein synthesizing functions of that subunit. The polypeptide is Large ribosomal subunit protein bL20 (Mycoplasma mobile (strain ATCC 43663 / 163K / NCTC 11711) (Mesomycoplasma mobile)).